Reading from the N-terminus, the 201-residue chain is dCTP deaminase, dUMP-forming (201 aa).

DCTP-binding positions include 117–122, D135, 143–145, Q163, Y177, and Q188; these read RSSFGR and TLE. The active-site Proton donor/acceptor is the E145.

Belongs to the dCTP deaminase family. Homotrimer.

It catalyses the reaction dCTP + 2 H2O = dUMP + NH4(+) + diphosphate. It functions in the pathway pyrimidine metabolism; dUMP biosynthesis; dUMP from dCTP: step 1/1. Bifunctional enzyme that catalyzes both the deamination of dCTP to dUTP and the hydrolysis of dUTP to dUMP without releasing the toxic dUTP intermediate. This is dCTP deaminase, dUMP-forming from Methanococcus aeolicus (strain ATCC BAA-1280 / DSM 17508 / OCM 812 / Nankai-3).